The following is a 272-amino-acid chain: Phosphate import ATP-binding protein PstB (272 aa).

An ABC transporter domain is found at 18-257; it reads VSIQNATISY…FNDTDKIFNA (240 aa). An ATP-binding site is contributed by 50–57; it reads GPSGCGKS.

This sequence belongs to the ABC transporter superfamily. Phosphate importer (TC 3.A.1.7) family. As to quaternary structure, the complex is composed of two ATP-binding proteins (PstB), two transmembrane proteins (PstC and PstA) and a solute-binding protein (PstS).

Its subcellular location is the cell inner membrane. The enzyme catalyses phosphate(out) + ATP + H2O = ADP + 2 phosphate(in) + H(+). Its function is as follows. Part of the ABC transporter complex PstSACB involved in phosphate import. Responsible for energy coupling to the transport system. This chain is Phosphate import ATP-binding protein PstB, found in Synechococcus sp. (strain CC9311).